A 654-amino-acid chain; its full sequence is Broad substrate specificity ATP-binding cassette transporter ABCG2 (654 aa).

Residues 1–394 (MSSSNVEVFI…KNLLGNPQAS (394 aa)) are Cytoplasmic-facing. The 250-residue stretch at 37–286 (LSFHNICYRV…FESAGYHCEA (250 aa)) folds into the ABC transporter domain. ATP is bound by residues 80–87 (GPTGGGKS), 184–190 (RGVSGGE), E211, and H243. The 263-residue stretch at 388–650 (LGNPQASIAQ…TIAYLKLLFL (263 aa)) folds into the ABC transmembrane type-2 domain. A helical membrane pass occupies residues 395–415 (IAQIIVTVILGLVIGAIYFGL). Topologically, residues 416-427 (NNDSTGIQNRAG) are extracellular. N-linked (GlcNAc...) asparagine glycosylation occurs at N417. A helical membrane pass occupies residues 428-448 (VLFFLTTNQCFSSVSAVELFV). The Cytoplasmic segment spans residues 449 to 476 (VEKKLFIHEYISGYYRVSSYFFGKLLSD). The helical transmembrane segment at 477–497 (LLPMRMLPSIIFTCIVYFMLG) threads the bilayer. At 498 to 505 (LKPTADAF) the chain is on the extracellular side. Residues 506–526 (FIMMFTLMMVAYSASSMALAI) form a helical membrane-spanning segment. Residues 527–534 (AAGQSVVS) are Cytoplasmic-facing. The helical transmembrane segment at 535-555 (VATLLMTICFVFMMIFSGLLV) threads the bilayer. N556, N595, and N599 each carry an N-linked (GlcNAc...) asparagine glycan. Topologically, residues 556-629 (NLTTIASWLS…LSPWGLWKNH (74 aa)) are extracellular. C591 and C607 form a disulfide bridge. Residues 630–650 (VALACMIVIFLTIAYLKLLFL) form a helical membrane-spanning segment. Topologically, residues 651–654 (KKYS) are cytoplasmic.

It belongs to the ABC transporter superfamily. ABCG family. Eye pigment precursor importer (TC 3.A.1.204) subfamily. Homodimer; disulfide-linked. The minimal functional unit is a homodimer, but the major oligomeric form in plasma membrane is a homotetramer with possibility of higher order oligomerization up to homododecamers. In terms of processing, N-glycosylated. Glycosylation-deficient ABCG2 is normally expressed and functional. Phosphorylated. Phosphorylation may regulate the localization to the plasma membrane, the homooligomerization and therefore, the activity of the transporter.

It localises to the cell membrane. Its subcellular location is the apical cell membrane. The protein localises to the mitochondrion membrane. It catalyses the reaction ATP + H2O + xenobioticSide 1 = ADP + phosphate + xenobioticSide 2.. The catalysed reaction is urate(in) + ATP + H2O = urate(out) + ADP + phosphate + H(+). It carries out the reaction indoxyl sulfate(in) + ATP + H2O = indoxyl sulfate(out) + ADP + phosphate + H(+). The enzyme catalyses sphing-4-enine 1-phosphate(in) + ATP + H2O = sphing-4-enine 1-phosphate(out) + ADP + phosphate + H(+). It catalyses the reaction estrone 3-sulfate(in) + ATP + H2O = estrone 3-sulfate(out) + ADP + phosphate + H(+). The catalysed reaction is dehydroepiandrosterone 3-sulfate(in) + ATP + H2O = dehydroepiandrosterone 3-sulfate(out) + ADP + phosphate + H(+). It carries out the reaction 4-methylumbelliferone sulfate(in) + ATP + H2O = 4-methylumbelliferone sulfate(out) + ADP + phosphate + H(+). The enzyme catalyses 5,7-dimethyl-2-methylamino-4-(3-pyridylmethyl)-1,3-benzothiazol-6-yl beta-D-glucuronate(in) + ATP + H2O = 5,7-dimethyl-2-methylamino-4-(3-pyridylmethyl)-1,3-benzothiazol-6-yl beta-D-glucuronate(out) + ADP + phosphate + H(+). It catalyses the reaction 4-methylumbelliferone beta-D-glucuronate(in) + ATP + H2O = 4-methylumbelliferone beta-D-glucuronate(out) + ADP + phosphate + H(+). The catalysed reaction is 5,7-dimethyl-2-methylamino-4-(3-pyridylmethyl)-1,3-benzothiazol-6-yl sulfate(in) + ATP + H2O = 5,7-dimethyl-2-methylamino-4-(3-pyridylmethyl)-1,3-benzothiazol-6-yl sulfate(out) + ADP + phosphate + H(+). It carries out the reaction 17beta-estradiol 17-O-(beta-D-glucuronate)(in) + ATP + H2O = 17beta-estradiol 17-O-(beta-D-glucuronate)(out) + ADP + phosphate + H(+). The enzyme catalyses methotrexate(in) + ATP + H2O = methotrexate(out) + ADP + phosphate + H(+). It catalyses the reaction riboflavin(in) + ATP + H2O = riboflavin(out) + ADP + phosphate + H(+). The catalysed reaction is pheophorbide a(in) + ATP + H2O = pheophorbide a(out) + ADP + phosphate + H(+). It carries out the reaction itaconate(in) + ATP + H2O = itaconate(out) + ADP + phosphate + H(+). In terms of biological role, broad substrate specificity ATP-dependent transporter of the ATP-binding cassette (ABC) family that actively extrudes a wide variety of physiological compounds, dietary toxins and xenobiotics from cells. Involved in porphyrin homeostasis, mediating the export of protoporphyrin IX (PPIX) from both mitochondria to cytosol and cytosol to extracellular space, it also functions in the cellular export of heme. Also mediates the efflux of sphingosine-1-P from cells. Acts as a urate exporter functioning in both renal and extrarenal urate excretion. In kidney, it also functions as a physiological exporter of the uremic toxin indoxyl sulfate. Also involved in the excretion of steroids like estrone 3-sulfate/E1S, 3beta-sulfooxy-androst-5-en-17-one/DHEAS, and other sulfate conjugates. Mediates the secretion of the riboflavin and biotin vitamins into milk. Extrudes pheophorbide a, a phototoxic porphyrin catabolite of chlorophyll, reducing its bioavailability. Plays an important role in the exclusion of xenobiotics from the brain. It confers to cells a resistance to multiple drugs and other xenobiotics including mitoxantrone, pheophorbide, camptothecin, methotrexate, azidothymidine, and the anthracyclines daunorubicin and doxorubicin, through the control of their efflux. In placenta, it limits the penetration of drugs from the maternal plasma into the fetus. May play a role in early stem cell self-renewal by blocking differentiation. In inflammatory macrophages, exports itaconate from the cytosol to the extracellular compartment and limits the activation of TFEB-dependent lysosome biogenesis involved in antibacterial innate immune response. The sequence is that of Broad substrate specificity ATP-binding cassette transporter ABCG2 (ABCG2) from Macaca mulatta (Rhesus macaque).